The following is a 381-amino-acid chain: ATP-dependent (S)-NAD(P)H-hydrate dehydratase (381 aa).

The 293-residue stretch at 84 to 376 folds into the YjeF C-terminal domain; the sequence is AEAVVRRITP…EFLGKSLEDI (293 aa). (6S)-NADPHX is bound by residues Gly197 and 250–256; that span reads NVYEYKR. Residues 290 to 294 and 309 to 318 contribute to the ATP site; these read KGKAD and GSPRRCGGQG. A (6S)-NADPHX-binding site is contributed by Asp319.

Belongs to the NnrD/CARKD family. Mg(2+) serves as cofactor.

It catalyses the reaction (6S)-NADHX + ATP = ADP + phosphate + NADH + H(+). It carries out the reaction (6S)-NADPHX + ATP = ADP + phosphate + NADPH + H(+). Catalyzes the dehydration of the S-form of NAD(P)HX at the expense of ATP, which is converted to ADP. Together with NAD(P)HX epimerase, which catalyzes the epimerization of the S- and R-forms, the enzyme allows the repair of both epimers of NAD(P)HX, a damaged form of NAD(P)H that is a result of enzymatic or heat-dependent hydration. This Sorghum bicolor (Sorghum) protein is ATP-dependent (S)-NAD(P)H-hydrate dehydratase.